We begin with the raw amino-acid sequence, 254 residues long: Ciliary microtubule associated protein 1A (254 aa).

STPGR repeat units follow at residues 180–205 (PGPAAYRQTEVQVTKFKAPQYTMAAR) and 216–241 (PGPGAHSPEKVTLNKPCAPTVTFGIK). A disordered region spans residues 207–228 (EPPGDKTLKPGPGAHSPEKVTL).

The protein belongs to the CIMAP family. In terms of assembly, microtubule inner protein component of sperm flagellar doublet microtubules. Testis-specific (at protein level). Expression restricted to the germ cell fraction, absent in somatic cell fractions such as Sertoli and Leydig cells. Expression detected in the third week postpartum (23 days) after haploid germ cells developed, expression increased with age. Expressed in the tails of elongated spermatids sticking out toward the tubular lumen, and in cytoplasmic droplets still attached to the spermatid tail membrane. Expressed in the tails of mature sperm, from the connecting piece proximal to the head, along the middle and principal pieces, down to the distal end piece.

The protein resides in the cytoplasm. The protein localises to the cytoskeleton. Its subcellular location is the flagellum axoneme. Functionally, outer dense fibers are filamentous structures located on the outside of the axoneme in the midpiece and principal piece of the mammalian sperm tail. May help to maintain the passive elastic structures and elastic recoil of the sperm tail. The chain is Ciliary microtubule associated protein 1A (Cimap1a) from Mus musculus (Mouse).